The following is a 162-amino-acid chain: Calcium vector protein (162 aa).

N-acetylalanine is present on A2. 4 consecutive EF-hand domains span residues 12-47 (EEKD…LGQT), 49-84 (TKRE…KWVR), 86-121 (DDEE…VGEE), and 123-158 (LTDA…SKNA). Residue K96 is modified to N6,N6,N6-trimethyllysine. Ca(2+) contacts are provided by D99, N101, D103, and E110. Residue K117 is modified to N6,N6,N6-trimethyllysine. D136, D138, N140, and E147 together coordinate Ca(2+).

It localises to the cytoplasm. Functionally, the exact function of this protein is not yet known. It interacts with CAVPT, a protein also of unknown function, in a calcium-dependent way. This protein binds two calcium ions. The polypeptide is Calcium vector protein (Branchiostoma lanceolatum (Common lancelet)).